A 336-amino-acid chain; its full sequence is Biotin synthase (336 aa).

One can recognise a Radical SAM core domain in the interval 55–282 (NRVQLSKLLN…QSHVRLTAGR (228 aa)). The [4Fe-4S] cluster site is built by Cys-70, Cys-74, and Cys-77. 4 residues coordinate [2Fe-2S] cluster: Cys-114, Cys-145, Cys-205, and Arg-277.

Belongs to the radical SAM superfamily. Biotin synthase family. Homodimer. [4Fe-4S] cluster serves as cofactor. The cofactor is [2Fe-2S] cluster.

It catalyses the reaction (4R,5S)-dethiobiotin + (sulfur carrier)-SH + 2 reduced [2Fe-2S]-[ferredoxin] + 2 S-adenosyl-L-methionine = (sulfur carrier)-H + biotin + 2 5'-deoxyadenosine + 2 L-methionine + 2 oxidized [2Fe-2S]-[ferredoxin]. The protein operates within cofactor biosynthesis; biotin biosynthesis; biotin from 7,8-diaminononanoate: step 2/2. Functionally, catalyzes the conversion of dethiobiotin (DTB) to biotin by the insertion of a sulfur atom into dethiobiotin via a radical-based mechanism. In Brucella anthropi (strain ATCC 49188 / DSM 6882 / CCUG 24695 / JCM 21032 / LMG 3331 / NBRC 15819 / NCTC 12168 / Alc 37) (Ochrobactrum anthropi), this protein is Biotin synthase.